Consider the following 142-residue polypeptide: Hemoglobin subunit alpha (142 aa).

The Globin domain maps to 2–142; sequence HLTADDKKHI…VSNVLTSKYR (141 aa). Heme b is bound by residues His59 and His88.

Belongs to the globin family. In terms of assembly, heterotetramer of two alpha chains and two beta chains. Red blood cells.

Functionally, involved in oxygen transport from the lung to the various peripheral tissues. The sequence is that of Hemoglobin subunit alpha (hba-A) from Xenopus tropicalis (Western clawed frog).